The sequence spans 23 residues: SLLQFNKMIKFETRKNAIPFYAF.

Ca(2+) is required as a cofactor. Contains 7 disulfide bonds. As to expression, expressed by the venom gland.

It is found in the secreted. The catalysed reaction is a 1,2-diacyl-sn-glycero-3-phosphocholine + H2O = a 1-acyl-sn-glycero-3-phosphocholine + a fatty acid + H(+). In terms of biological role, snake venom phospholipase A2 (PLA2) that shows presynaptic neurotoxicity. PLA2 catalyzes the calcium-dependent hydrolysis of the 2-acyl groups in 3-sn-phosphoglycerides. The chain is Basic phospholipase A2 CB2 from Crotalus durissus cumanensis (South American rattlesnake).